A 303-amino-acid polypeptide reads, in one-letter code: RELT-like protein 2 (303 aa).

A helical transmembrane segment spans residues 15–35; sequence LYMLFLLVLVFFLMGLVGFMI. 2 disordered regions span residues 46-67 and 111-303; these read CRTS…DDDM and SSLQ…AGGV. A Phosphoserine modification is found at Ser-52. Composition is skewed to basic and acidic residues over residues 148 to 158 and 172 to 188; these read RSKEGKSRPRP and THIE…DGSP. Positions 194-212 are enriched in gly residues; it reads GSGGGQDPGGGQGPGGGQP.

The protein belongs to the RELT family. Interacts with RELT, RELL1, OXSR1, PLSCR1 and TRAF2.

The protein localises to the cell membrane. Functionally, induces activation of MAPK14/p38 cascade, when overexpressed. Induces apoptosis, when overexpressed. The chain is RELT-like protein 2 (RELL2) from Bos taurus (Bovine).